The sequence spans 285 residues: MQSLNYLVVILTVAGVLVILGFTPLIRKLKIQFYCLQVFAAILFLYVFFGRQIIYIFPDIYGTAAKAKNAVANVPLDSLRLSRIFLLDLCPFFALIGPIFIFLRQKKVAGVLAIFGFYGAAITLFGELIFTPLKQEEIVKFLFVGLENNQVYFMMHFLSFLLSLAVFLWDDGFSLISFFYIHVFALAYLSYVALMVNIFKGQITGNTTGILAEDWLSGEYKNVAVFLKLDPKNADLIFGVSFGLSYFAIVLLTVLVNIPTFIQLTKDKQMVKLALQLKKAQASVA.

The next 7 helical transmembrane spans lie at 6 to 26 (YLVVILTVAGVLVILGFTPLI), 38 to 58 (VFAAILFLYVFFGRQIIYIFP), 84 to 104 (IFLLDLCPFFALIGPIFIFLR), 110 to 130 (GVLAIFGFYGAAITLFGELIF), 153 to 173 (FMMHFLSFLLSLAVFLWDDGF), 176 to 196 (ISFFYIHVFALAYLSYVALMV), and 236 to 256 (LIFGVSFGLSYFAIVLLTVLV).

The protein localises to the cell membrane. This is an uncharacterized protein from Mycoplasma pneumoniae (strain ATCC 29342 / M129 / Subtype 1) (Mycoplasmoides pneumoniae).